Reading from the N-terminus, the 197-residue chain is Phosphoheptose isomerase (197 aa).

Residues 36-197 form the SIS domain; the sequence is MVNALLNEGK…IDSQLFGSEE (162 aa). A substrate-binding site is contributed by 51–53; the sequence is NGG. The Zn(2+) site is built by His60 and Glu64. Residues Glu64, 93-94, 119-121, Ser124, and Gln174 each bind substrate; these read ND and STS. Residues Gln174 and His182 each coordinate Zn(2+).

The protein belongs to the SIS family. GmhA subfamily. As to quaternary structure, homotetramer. Requires Zn(2+) as cofactor.

It localises to the cytoplasm. It carries out the reaction 2 D-sedoheptulose 7-phosphate = D-glycero-alpha-D-manno-heptose 7-phosphate + D-glycero-beta-D-manno-heptose 7-phosphate. It participates in carbohydrate biosynthesis; D-glycero-D-manno-heptose 7-phosphate biosynthesis; D-glycero-alpha-D-manno-heptose 7-phosphate and D-glycero-beta-D-manno-heptose 7-phosphate from sedoheptulose 7-phosphate: step 1/1. In terms of biological role, catalyzes the isomerization of sedoheptulose 7-phosphate in D-glycero-D-manno-heptose 7-phosphate. The polypeptide is Phosphoheptose isomerase (Pseudomonas syringae pv. syringae (strain B728a)).